Reading from the N-terminus, the 1211-residue chain is Homeodomain-interacting protein kinase 1 (1211 aa).

A Glycyl lysine isopeptide (Lys-Gly) (interchain with G-Cter in SUMO); alternate cross-link involves residue Lys-25. Lys-25 participates in a covalent cross-link: Glycyl lysine isopeptide (Lys-Gly) (interchain with G-Cter in SUMO2); alternate. Residues Lys-120 and Lys-124 each participate in a glycyl lysine isopeptide (Lys-Gly) (interchain with G-Cter in SUMO2) cross-link. Residues 190 to 518 form the Protein kinase domain; that stretch reads YEVLEFLGRG…PLKTLNHQFV (329 aa). ATP-binding positions include 196–204 and Lys-219; that span reads LGRGTFGQV. The Proton acceptor role is filled by Asp-315. Positions 835–856 are disordered; that stretch reads QQQSSSLPSRKNKQSAPVSSTS. Residues 844–847 carry the Nuclear localization signal 1 (NLS1) motif; that stretch reads RKNK. Ser-872 bears the Phosphoserine mark. The interaction with TP53 stretch occupies residues 885–1094; that stretch reads PVQDQHQPII…FQHGSPLHST (210 aa). The tract at residues 891 to 998 is required for localization to nuclear speckles; the sequence is QPIIIPDTPS…PLKTQLGDCT (108 aa). Residues 902 to 926 form an SUMO interaction motifs (SIM); required for nuclear localization and kinase activity region; the sequence is PVSVITIRSDTDEEEDNKFKPSSSS. Lys-991 participates in a covalent cross-link: Glycyl lysine isopeptide (Lys-Gly) (interchain with G-Cter in SUMO2). 3 disordered regions span residues 1002–1023, 1047–1070, and 1085–1105; these read QASG…GQSS, LSQN…APRR, and FQHG…APAH. 2 stretches are compositionally biased toward low complexity: residues 1048 to 1064 and 1096 to 1105; these read SQNQ…ERSS and HPHLAPAPAH. Ser-1201 bears the Phosphoserine mark. Residue Lys-1204 forms a Glycyl lysine isopeptide (Lys-Gly) (interchain with G-Cter in SUMO) linkage.

Belongs to the protein kinase superfamily. CMGC Ser/Thr protein kinase family. HIPK subfamily. Interacts with Nkx1-2, Nkx2-5, MYB, PARK7, DAXX and p53/TP53. Part of a cytoplasmic complex made of HIPK1, DAB2IP and MAP3K5 in response to TNF. This complex formation promotes MAP3K5-JNK activation and subsequent apoptosis. In terms of processing, phosphorylated and activated by JNK1. Autophosphorylated. Post-translationally, sumoylated. When conjugated it is directed to nuclear speckles. SENP1-mediated desumoylation is mediated by TNF in response to stress stimuli, triggering transient translocation from nucleus to cytoplasm.

The protein localises to the nucleus. It localises to the cytoplasm. Its subcellular location is the nucleus speckle. It carries out the reaction L-seryl-[protein] + ATP = O-phospho-L-seryl-[protein] + ADP + H(+). The catalysed reaction is L-threonyl-[protein] + ATP = O-phospho-L-threonyl-[protein] + ADP + H(+). Its function is as follows. Serine/threonine-protein kinase involved in transcription regulation and TNF-mediated cellular apoptosis. Plays a role as a corepressor for homeodomain transcription factors. Phosphorylates DAXX and MYB. Phosphorylates DAXX in response to stress, and mediates its translocation from the nucleus to the cytoplasm. Inactivates MYB transcription factor activity by phosphorylation. Prevents MAP3K5-JNK activation in the absence of TNF. TNF triggers its translocation to the cytoplasm in response to stress stimuli, thus activating nuclear MAP3K5-JNK by derepression and promoting apoptosis. May be involved in anti-oxidative stress responses. Involved in the regulation of eye size, lens formation and retinal lamination during late embryogenesis. Promotes angiogenesis and to be involved in erythroid differentiation. May be involved in malignant squamous cell tumor formation. Phosphorylates PAGE4 at 'Thr-51' which is critical for the ability of PAGE4 to potentiate the transcriptional activator activity of JUN. This chain is Homeodomain-interacting protein kinase 1, found in Rattus norvegicus (Rat).